The sequence spans 89 residues: Small ribosomal subunit protein uS15 (89 aa).

Belongs to the universal ribosomal protein uS15 family. As to quaternary structure, part of the 30S ribosomal subunit. Forms a bridge to the 50S subunit in the 70S ribosome, contacting the 23S rRNA.

Functionally, one of the primary rRNA binding proteins, it binds directly to 16S rRNA where it helps nucleate assembly of the platform of the 30S subunit by binding and bridging several RNA helices of the 16S rRNA. In terms of biological role, forms an intersubunit bridge (bridge B4) with the 23S rRNA of the 50S subunit in the ribosome. The protein is Small ribosomal subunit protein uS15 of Pseudomonas aeruginosa (strain LESB58).